We begin with the raw amino-acid sequence, 637 residues long: tRNA uridine 5-carboxymethylaminomethyl modification enzyme MnmG (637 aa).

14–19 is an FAD binding site; sequence GAGHAG. Position 279 to 293 (279 to 293) interacts with NAD(+); that stretch reads GPRYCPSIEDKVVRF.

The protein belongs to the MnmG family. In terms of assembly, homodimer. Heterotetramer of two MnmE and two MnmG subunits. It depends on FAD as a cofactor.

It localises to the cytoplasm. In terms of biological role, NAD-binding protein involved in the addition of a carboxymethylaminomethyl (cmnm) group at the wobble position (U34) of certain tRNAs, forming tRNA-cmnm(5)s(2)U34. In Desulfitobacterium hafniense (strain DSM 10664 / DCB-2), this protein is tRNA uridine 5-carboxymethylaminomethyl modification enzyme MnmG.